Reading from the N-terminus, the 78-residue chain is U7-lycotoxin-Ls1a (78 aa).

Residues 1 to 22 (MKLIIFTGLALLLIVSLIDVEA) form the signal peptide. The propeptide occupies 23–26 (QNEG).

It belongs to the neurotoxin 19 (CSTX) family. 07 (U7-Lctx) subfamily. In terms of processing, contains 4 disulfide bonds. In terms of tissue distribution, expressed by the venom gland.

The protein localises to the secreted. In Lycosa singoriensis (Wolf spider), this protein is U7-lycotoxin-Ls1a.